The following is a 213-amino-acid chain: Octanoyltransferase (213 aa).

Residues 32–207 (ENSHDEIWLV…NILALLNNPP (176 aa)) form the BPL/LPL catalytic domain. Residues 71–78 (RGGQVTYH), 138–140 (SLG), and 151–153 (GLA) contribute to the substrate site. Cys-169 serves as the catalytic Acyl-thioester intermediate.

This sequence belongs to the LipB family.

The protein resides in the cytoplasm. It carries out the reaction octanoyl-[ACP] + L-lysyl-[protein] = N(6)-octanoyl-L-lysyl-[protein] + holo-[ACP] + H(+). Its pathway is protein modification; protein lipoylation via endogenous pathway; protein N(6)-(lipoyl)lysine from octanoyl-[acyl-carrier-protein]: step 1/2. Functionally, catalyzes the transfer of endogenously produced octanoic acid from octanoyl-acyl-carrier-protein onto the lipoyl domains of lipoate-dependent enzymes. Lipoyl-ACP can also act as a substrate although octanoyl-ACP is likely to be the physiological substrate. In Salmonella paratyphi A (strain ATCC 9150 / SARB42), this protein is Octanoyltransferase.